We begin with the raw amino-acid sequence, 1108 residues long: Serine/threonine-protein kinase AKL1 (1108 aa).

At Ser-2 the chain carries N-acetylserine. Ser-10 is subject to Phosphoserine. The Protein kinase domain maps to 35 to 319 (VEVVNYLAEG…IYQVLYHLCE (285 aa)). Residues 41-49 (LAEGGFAQI) and Lys-70 each bind ATP. The active-site Proton acceptor is Asp-181. The tract at residues 405–466 (IPSQNVGQEL…QSPGIEDKSI (62 aa)) is disordered. Ser-407 carries the post-translational modification Phosphoserine. Residues 419-435 (ESQSDQRKSTLSEDKSS) are compositionally biased toward basic and acidic residues. A compositionally biased stretch (low complexity) spans 436 to 449 (RTTSNANSSGTANN). Phosphothreonine is present on Thr-471. A compositionally biased stretch (polar residues) spans 493-513 (KQSSDPTISEQSPRLNTQSLP). A disordered region spans residues 493 to 534 (KQSSDPTISEQSPRLNTQSLPQRQKSTSSYSSGGRSMKSTSY). Residue Ser-504 is modified to Phosphoserine. A compositionally biased stretch (low complexity) spans 514-534 (QRQKSTSSYSSGGRSMKSTSY). 2 positions are modified to phosphoserine: Ser-541 and Ser-574. A compositionally biased stretch (low complexity) spans 590 to 629 (QQQGQRYQQAQNQTGTQGNTFPDESQYQSRVEQQQQQQDQ). Disordered regions lie at residues 590 to 663 (QQQG…GDSG) and 765 to 791 (EDMR…HSSS). Positions 781-791 (NSANEPMHSSS) are enriched in polar residues. Residue Ser-801 is modified to Phosphoserine. The interval 807–838 (AGKQSFQDTNEPQTGGIEDAGGSGTIKGSNNN) is disordered. Positions 810-819 (QSFQDTNEPQ) are enriched in polar residues. Ser-846 is subject to Phosphoserine. Residues 858–1108 (GAAVSSFSSS…SFFSVFRSEK (251 aa)) are disordered. A compositionally biased stretch (low complexity) spans 859–872 (AAVSSFSSSSSSAS). Residues 910–934 (DDARRGKTAERRPLHNERGHKDQAR) show a composition bias toward basic and acidic residues. Polar residues predominate over residues 935-976 (SSDASKSNQFKSKDFSSVSTRQPRQSLDLNFQEVNLSSPTLT). 2 positions are modified to phosphoserine: Ser-953 and Ser-960. Positions 1006–1048 (ENKRHSTGHELSTRSNGKHETHRTGSKQRHDLERYRHSKDKDS) are enriched in basic and acidic residues. Glycyl lysine isopeptide (Lys-Gly) (interchain with G-Cter in ubiquitin) cross-links involve residues Lys-1008 and Lys-1046. Phosphoserine is present on Ser-1048. The segment covering 1049–1060 (NSSITISTSTPS) has biased composition (low complexity). Basic and acidic residues predominate over residues 1071 to 1082 (QSLDLERVRREA). Ser-1072 carries the phosphoserine modification.

The protein belongs to the protein kinase superfamily. Ser/Thr protein kinase family.

The catalysed reaction is L-seryl-[protein] + ATP = O-phospho-L-seryl-[protein] + ADP + H(+). The enzyme catalyses L-threonyl-[protein] + ATP = O-phospho-L-threonyl-[protein] + ADP + H(+). In terms of biological role, phosphorylates SCD5. The polypeptide is Serine/threonine-protein kinase AKL1 (AKL1) (Saccharomyces cerevisiae (strain ATCC 204508 / S288c) (Baker's yeast)).